We begin with the raw amino-acid sequence, 463 residues long: Maintenance of mitochondrial morphology protein 1-2 (463 aa).

Over 1-23 the chain is Lumenal; it reads MVIPAELIQKALKQQSGWGFTEG. The helical transmembrane segment at 24–44 threads the bilayer; that stretch reads LVLGQLSVIITVIIILKFVIF. The Cytoplasmic portion of the chain corresponds to 45–463; that stretch reads AENKSPKKGN…TGADTASGSS (419 aa). The disordered stretch occupies residues 72-152; sequence GGQTANGVKT…VAGSTSNLAV (81 aa). Positions 108 to 122 are enriched in polar residues; it reads RPGSSRVSMVRSTSG. In terms of domain architecture, SMP-LTD spans 205-435; it reads APESLDWFNV…EPHQMIFILP (231 aa).

This sequence belongs to the MMM1 family. Homodimer. Component of the ER-mitochondria encounter structure (ERMES) or MDM complex, composed of MMM1, MDM10, MDM12 and MDM34. An MMM1 homodimer associates with one molecule of MDM12 on each side in a pairwise head-to-tail manner, and the SMP-LTD domains of MMM1 and MDM12 generate a continuous hydrophobic tunnel for phospholipid trafficking.

It localises to the endoplasmic reticulum membrane. Functionally, component of the ERMES/MDM complex, which serves as a molecular tether to connect the endoplasmic reticulum (ER) and mitochondria. Components of this complex are involved in the control of mitochondrial shape and protein biogenesis, and function in nonvesicular lipid trafficking between the ER and mitochondria. The MDM12-MMM1 subcomplex functions in the major beta-barrel assembly pathway that is responsible for biogenesis of all outer membrane beta-barrel proteins, and acts in a late step after the SAM complex. The MDM10-MDM12-MMM1 subcomplex further acts in the TOM40-specific pathway after the action of the MDM12-MMM1 complex. Essential for establishing and maintaining the structure of mitochondria and maintenance of mtDNA nucleoids. In Yarrowia lipolytica (strain CLIB 122 / E 150) (Yeast), this protein is Maintenance of mitochondrial morphology protein 1-2.